The primary structure comprises 188 residues: MKVSASSLRKGNVVDLDGKLYVVLSAQNIHPGKGTPVTQLDMRRISDGVKVSERYRTTETVERATVDDRDYTFLYEDGEGFHFMNPESYEQVTASAEMIGDAKYYLTDGCTVKLSTHEGVPIAIELPRLATFEVVDTEPTVKGQTASSSYKPAVLSNGLRTMIPPYITVGTKIVVLTEDGSYQERAKD.

It belongs to the elongation factor P family.

Its subcellular location is the cytoplasm. It participates in protein biosynthesis; polypeptide chain elongation. Its function is as follows. Involved in peptide bond synthesis. Stimulates efficient translation and peptide-bond synthesis on native or reconstituted 70S ribosomes in vitro. Probably functions indirectly by altering the affinity of the ribosome for aminoacyl-tRNA, thus increasing their reactivity as acceptors for peptidyl transferase. The sequence is that of Elongation factor P from Phenylobacterium zucineum (strain HLK1).